The following is a 260-amino-acid chain: Small ribosomal subunit protein cS22 (260 aa).

The transit peptide at 1 to 62 directs the protein to the chloroplast; sequence MATISSILPC…TNPPLLKVRA (62 aa). Positions 63-78 are enriched in low complexity; the sequence is VVTEETSSSSTASSSS. The interval 63-83 is disordered; it reads VVTEETSSSSTASSSSDGEGA. 2 consecutive RRM domains span residues 84–162 and 184–260; these read RRLY…ITEK and YKVY…VNKA.

As to quaternary structure, component of the chloroplast small ribosomal subunit (SSU). Mature 70S chloroplast ribosomes of higher plants consist of a small (30S) and a large (50S) subunit. The 30S small subunit contains 1 molecule of ribosomal RNA (16S rRNA) and 24 different proteins. The 50S large subunit contains 3 rRNA molecules (23S, 5S and 4.5S rRNA) and 33 different proteins.

It localises to the plastid. The protein resides in the chloroplast. Functionally, component of the chloroplast ribosome (chloro-ribosome), a dedicated translation machinery responsible for the synthesis of chloroplast genome-encoded proteins, including proteins of the transcription and translation machinery and components of the photosynthetic apparatus. cS22 may have a role in the recruitment of stored chloroplast mRNAs for active protein synthesis. The protein is Small ribosomal subunit protein cS22 (PSRP2) of Spinacia oleracea (Spinach).